The chain runs to 302 residues: MAGRELSHLQQLEAESIQIIREVAAEFDNPVMLYSIGKDSSVMLHLARKAFYPGKIPFPLLHVDTGWKFKEMIAFRDTQAKKFGFELLTHINPEGLAQGINPFDHGSAKHTDIMKTQGLKQALNQYGFDAAFGGARRDEEKSRAKERVYSFRDRHHRWDPKNQRPELWRTYNGAVNKGESIRVFPLSNWTELDIWQYIYQENIELVPLYFAAKRKVVERGGQLIMADDERMQLAEGEQIKEEVVRFRTLGCYPLTAAMHSEADSLEKIIEEMLLTRSSERQGRLIDSDQSASMEQKKRQGYF.

The disordered stretch occupies residues 280–302 (RQGRLIDSDQSASMEQKKRQGYF).

The protein belongs to the PAPS reductase family. CysD subfamily. Heterodimer composed of CysD, the smaller subunit, and CysN.

It catalyses the reaction sulfate + ATP + H(+) = adenosine 5'-phosphosulfate + diphosphate. The protein operates within sulfur metabolism; hydrogen sulfide biosynthesis; sulfite from sulfate: step 1/3. In terms of biological role, with CysN forms the ATP sulfurylase (ATPS) that catalyzes the adenylation of sulfate producing adenosine 5'-phosphosulfate (APS) and diphosphate, the first enzymatic step in sulfur assimilation pathway. APS synthesis involves the formation of a high-energy phosphoric-sulfuric acid anhydride bond driven by GTP hydrolysis by CysN coupled to ATP hydrolysis by CysD. The polypeptide is Sulfate adenylyltransferase subunit 2 (Shewanella putrefaciens (strain CN-32 / ATCC BAA-453)).